A 265-amino-acid chain; its full sequence is MDDIRYADRIVSADEVKIAARKAQVFYGSNHALRDVDVDILGKTVTAFIGPSGCGKSTFLRCLNRMNDTIPGCRVEGKITLDGQDIYDTRVDPVQLRAKVGMVFQKPNPFPKSIYDNVAYGPRIHGLARSKAEIDEIVEGALRRAALWNEAKDRLSSPGTGLSGGQQQRLCIARAIATSPEVLLMDEPCSALDPIATAQIEELIDELRAQFSVVIVTHSMQQAARVSQRTAFFHLGRLVEYGETGQIFTNPRDPRTESYISGRIG.

The ABC transporter domain maps to 11–260 (VSADEVKIAA…PRDPRTESYI (250 aa)). ATP is bound at residue 50–57 (GPSGCGKS).

The protein belongs to the ABC transporter superfamily. Phosphate importer (TC 3.A.1.7) family. In terms of assembly, the complex is composed of two ATP-binding proteins (PstB), two transmembrane proteins (PstC and PstA) and a solute-binding protein (PstS).

It is found in the cell inner membrane. The enzyme catalyses phosphate(out) + ATP + H2O = ADP + 2 phosphate(in) + H(+). In terms of biological role, part of the ABC transporter complex PstSACB involved in phosphate import. Responsible for energy coupling to the transport system. The sequence is that of Phosphate import ATP-binding protein PstB from Cereibacter sphaeroides (strain ATCC 17023 / DSM 158 / JCM 6121 / CCUG 31486 / LMG 2827 / NBRC 12203 / NCIMB 8253 / ATH 2.4.1.) (Rhodobacter sphaeroides).